A 636-amino-acid polypeptide reads, in one-letter code: MINITTSFPNKTAAAFHKHVTGSEVASAMFPEIAGSIVALFVDGNLQDLATPISKDGSVDPVTIESNTGMDIIRHDAAHIMARAVREIFPDTKLAIGPTIENGFYYDFDLSHSLSEKDFEAIERKMSDIIAKDERFVREVWPRERAIKFFEDLGEHYKLEILSKVPLGEEITVYKHGEFVDLCRGPHAPSARYVKAFKLTKISGAYWLGDQKNKMLQRVYGTAWHSSEALASYIHNMQEAEKRDHRKIAKDLGWFHIQNEALGQVFWHDKGWVIYRIIEEYIRCKLKKHGYLEVKTPIMLDRKLWEKSGHWEKFKENMFVVEDDKKELAIKPMNCPCHVQIFKSKIRSYKELPIRMAEFGMCHRNEPSGSLYGLMRVRGFTQDDAHIFCTHEQVRDEVLRFYELLMEVYKDFGFDSVTVKLSDRPENRIGSDEIWDRSEQSLMEPMNALGVQYTINKGEGAFYGPKLEFTLKDSIGREWQCGTVQLDFVLPDRLGAYYIGEDGKKHIPVIIHRAVLGTIERFIGILIEHYAGNIPAWLAPVQLEILTVSGEVAEYARDLAEMASQENVRVELNAAEENISHKIRKAIFNKVPIVWVVGKSEAGDRCVSVRRYGSGETCRMAAGKALKTLLTCVSMR.

Residues 1–63 (MINITTSFPN…SKDGSVDPVT (63 aa)) enclose the TGS domain. The segment at 244–535 (DHRKIAKDLG…LIEHYAGNIP (292 aa)) is catalytic. 3 residues coordinate Zn(2+): cysteine 335, histidine 386, and histidine 512.

It belongs to the class-II aminoacyl-tRNA synthetase family. As to quaternary structure, homodimer. It depends on Zn(2+) as a cofactor.

It is found in the cytoplasm. It carries out the reaction tRNA(Thr) + L-threonine + ATP = L-threonyl-tRNA(Thr) + AMP + diphosphate + H(+). Functionally, catalyzes the attachment of threonine to tRNA(Thr) in a two-step reaction: L-threonine is first activated by ATP to form Thr-AMP and then transferred to the acceptor end of tRNA(Thr). Also edits incorrectly charged L-seryl-tRNA(Thr). The chain is Threonine--tRNA ligase from Anaplasma marginale (strain Florida).